The following is a 244-amino-acid chain: MKIDFLTLFPEMFEGVLHSSILKKAQEKEAVSFNVVNFREYSDHKHKTVDDYPYGGGAGMVLKAQPVFDAVEDLTNKASKKPRIILVCPQGERYTQKKAEELAKEEHLMFICGHYEGYDERIREHLVTDEISIGDFVLTGGELPAMMIADSVVRLLPHVLGKEASHIEDSFSTGLLEHPHYTRPADYKGLKVPDVLLSGNHAKIEEWRRKESLKRTYTRRPDLIDSCKTLTEEEKRWLWQLHND.

Residues Gly-113 and Ile-133 to Leu-138 contribute to the S-adenosyl-L-methionine site.

It belongs to the RNA methyltransferase TrmD family. As to quaternary structure, homodimer.

It localises to the cytoplasm. It catalyses the reaction guanosine(37) in tRNA + S-adenosyl-L-methionine = N(1)-methylguanosine(37) in tRNA + S-adenosyl-L-homocysteine + H(+). Specifically methylates guanosine-37 in various tRNAs. This chain is tRNA (guanine-N(1)-)-methyltransferase, found in Bacillus pumilus (strain SAFR-032).